The chain runs to 27 residues: Pregnancy-associated glycoprotein 59 (27 aa).

The protein belongs to the peptidase A1 family. Post-translationally, glycosylated. As to expression, placenta.

The chain is Pregnancy-associated glycoprotein 59 (PAG59) from Capra hircus (Goat).